We begin with the raw amino-acid sequence, 365 residues long: Cobalt-precorrin-5B C(1)-methyltransferase (365 aa).

This sequence belongs to the CbiD family.

The enzyme catalyses Co-precorrin-5B + S-adenosyl-L-methionine = Co-precorrin-6A + S-adenosyl-L-homocysteine. The protein operates within cofactor biosynthesis; adenosylcobalamin biosynthesis; cob(II)yrinate a,c-diamide from sirohydrochlorin (anaerobic route): step 6/10. Functionally, catalyzes the methylation of C-1 in cobalt-precorrin-5B to form cobalt-precorrin-6A. This chain is Cobalt-precorrin-5B C(1)-methyltransferase, found in Methanococcus maripaludis (strain C6 / ATCC BAA-1332).